The chain runs to 298 residues: Cyclin-dependent kinase 2 (298 aa).

The residue at position 1 (Met1) is an N-acetylmethionine. One can recognise a Protein kinase domain in the interval 4-286 (FQKVEKIGEG…AKAALAHPFF (283 aa)). The residue at position 6 (Lys6) is an N6-acetyllysine. 10-18 (IGEGTYGVV) is an ATP binding site. A Phosphothreonine modification is found at Thr14. Phosphotyrosine; by WEE1 is present on Tyr15. Tyr19 is modified (phosphotyrosine). ATP-binding positions include Lys33, 81–83 (EFL), and Asp86. The active-site Proton acceptor is Asp127. Residues 129–132 (KPQN) and Asp145 contribute to the ATP site. Mg(2+) is bound by residues Asn132 and Asp145. Thr160 carries the phosphothreonine; by CAK and CCRK modification.

The protein belongs to the protein kinase superfamily. CMGC Ser/Thr protein kinase family. CDC2/CDKX subfamily. Found in a complex with CABLES1, CCNA1 and CCNE1. Interacts with CABLES1. Interacts with UHRF2. Part of a complex consisting of UHRF2, CDK2 and CCNE1. Interacts with the Speedy/Ringo proteins SPDYA and SPDYC. Interaction with SPDYA promotes kinase activation via a conformation change that alleviates obstruction of the substrate-binding cleft by the T-loop. Found in a complex with both SPDYA and CDKN1B/KIP1. Binds to RB1 and CDK7. Binding to CDKN1A (p21) leads to CDK2/cyclin E inactivation at the G1-S phase DNA damage checkpoint, thereby arresting cells at the G1-S transition during DNA repair. Associated with PTPN6 and beta-catenin/CTNNB1. Interacts with CACUL1. May interact with CEP63. Interacts with ANKRD17. Interacts with CEBPA (when phosphorylated). Forms a ternary complex with CCNA2 and CDKN1B; CDKN1B inhibits the kinase activity of CDK2 through conformational rearrangements. Interacts with cyclins A, B1, B3, D, or E. Interacts with CDK2AP2. Mg(2+) serves as cofactor. Phosphorylated at Thr-160 by CDK7 in a CAK complex. Phosphorylation at Thr-160 promotes kinase activity, whereas phosphorylation at Tyr-15 by WEE1 reduces slightly kinase activity. Phosphorylated on Thr-14 and Tyr-15 during S and G2 phases before being dephosphorylated by CDC25A. In terms of processing, nitrosylated after treatment with nitric oxide (DETA-NO).

The protein localises to the cytoplasm. Its subcellular location is the cytoskeleton. The protein resides in the microtubule organizing center. It is found in the centrosome. It localises to the nucleus. The protein localises to the cajal body. Its subcellular location is the endosome. It carries out the reaction L-seryl-[protein] + ATP = O-phospho-L-seryl-[protein] + ADP + H(+). The catalysed reaction is L-threonyl-[protein] + ATP = O-phospho-L-threonyl-[protein] + ADP + H(+). Phosphorylation at Thr-14 or Tyr-15 inactivates the enzyme, while phosphorylation at Thr-160 activates it. Inhibited by 1,25-dihydroxyvitamin D(3) (1,25-(OH)(2)D(3)), AG-024322, N-(4-Piperidinyl)-4-(2,6-dichlorobenzoylamino)-1H-pyrazole-3-carboxamide (AT7519), R547 (Ro-4584820), purine, pyrimidine and pyridine derivatives, 2-aminopyrimidines, paullones, thiazo derivatives, macrocyclic quinoxalin-2-one, pyrazolo[1,5-a]-1,3,5-triazine, pyrazolo[1,5-a]pyrimidine, 2-(1-ethyl-2-hydroxyethylamino)-6-benzylamino-9-isopropylpurine (roscovitine, seliciclib and CYC202), SNS-032 (BMS-387032), triazolo[1,5-a]pyrimidines, staurosporine and olomoucine. Stimulated by MYC. Inactivated by CDKN1A (p21). Serine/threonine-protein kinase involved in the control of the cell cycle; essential for meiosis, but dispensable for mitosis. Phosphorylates CABLES1, CTNNB1, CDK2AP2, ERCC6, NBN, USP37, p53/TP53, NPM1, CDK7, RB1, BRCA2, MYC, NPAT, EZH2. Triggers duplication of centrosomes and DNA. Acts at the G1-S transition to promote the E2F transcriptional program and the initiation of DNA synthesis, and modulates G2 progression; controls the timing of entry into mitosis/meiosis by controlling the subsequent activation of cyclin B/CDK1 by phosphorylation, and coordinates the activation of cyclin B/CDK1 at the centrosome and in the nucleus. Crucial role in orchestrating a fine balance between cellular proliferation, cell death, and DNA repair in embryonic stem cells (ESCs). Activity of CDK2 is maximal during S phase and G2; activated by interaction with cyclin E during the early stages of DNA synthesis to permit G1-S transition, and subsequently activated by cyclin A2 (cyclin A1 in germ cells) during the late stages of DNA replication to drive the transition from S phase to mitosis, the G2 phase. EZH2 phosphorylation promotes H3K27me3 maintenance and epigenetic gene silencing. Cyclin E/CDK2 prevents oxidative stress-mediated Ras-induced senescence by phosphorylating MYC. Involved in G1-S phase DNA damage checkpoint that prevents cells with damaged DNA from initiating mitosis; regulates homologous recombination-dependent repair by phosphorylating BRCA2, this phosphorylation is low in S phase when recombination is active, but increases as cells progress towards mitosis. In response to DNA damage, double-strand break repair by homologous recombination a reduction of CDK2-mediated BRCA2 phosphorylation. Involved in regulation of telomere repair by mediating phosphorylation of NBN. Phosphorylation of RB1 disturbs its interaction with E2F1. NPM1 phosphorylation by cyclin E/CDK2 promotes its dissociates from unduplicated centrosomes, thus initiating centrosome duplication. Cyclin E/CDK2-mediated phosphorylation of NPAT at G1-S transition and until prophase stimulates the NPAT-mediated activation of histone gene transcription during S phase. Required for vitamin D-mediated growth inhibition by being itself inactivated. Involved in the nitric oxide- (NO) mediated signaling in a nitrosylation/activation-dependent manner. USP37 is activated by phosphorylation and thus triggers G1-S transition. CTNNB1 phosphorylation regulates insulin internalization. Phosphorylates FOXP3 and negatively regulates its transcriptional activity and protein stability. Phosphorylates ERCC6 which is essential for its chromatin remodeling activity at DNA double-strand breaks. Acts as a regulator of the phosphatidylinositol 3-kinase/protein kinase B signal transduction by mediating phosphorylation of the C-terminus of protein kinase B (PKB/AKT1 and PKB/AKT2), promoting its activation. The sequence is that of Cyclin-dependent kinase 2 (CDK2) from Homo sapiens (Human).